An 84-amino-acid polypeptide reads, in one-letter code: Large ribosomal subunit protein bL31B (84 aa).

It belongs to the bacterial ribosomal protein bL31 family. Type B subfamily. As to quaternary structure, part of the 50S ribosomal subunit.

This is Large ribosomal subunit protein bL31B from Staphylococcus aureus (strain Mu3 / ATCC 700698).